The primary structure comprises 159 residues: 6,7-dimethyl-8-ribityllumazine synthase (159 aa).

5-amino-6-(D-ribitylamino)uracil contacts are provided by residues Phe22, 56-58 (AFE), and 80-82 (AVI). 85–86 (AT) is a (2S)-2-hydroxy-3-oxobutyl phosphate binding site. His88 acts as the Proton donor in catalysis. 5-amino-6-(D-ribitylamino)uracil is bound at residue Phe113. (2S)-2-hydroxy-3-oxobutyl phosphate is bound at residue Arg127.

It belongs to the DMRL synthase family.

The enzyme catalyses (2S)-2-hydroxy-3-oxobutyl phosphate + 5-amino-6-(D-ribitylamino)uracil = 6,7-dimethyl-8-(1-D-ribityl)lumazine + phosphate + 2 H2O + H(+). The protein operates within cofactor biosynthesis; riboflavin biosynthesis; riboflavin from 2-hydroxy-3-oxobutyl phosphate and 5-amino-6-(D-ribitylamino)uracil: step 1/2. Catalyzes the formation of 6,7-dimethyl-8-ribityllumazine by condensation of 5-amino-6-(D-ribitylamino)uracil with 3,4-dihydroxy-2-butanone 4-phosphate. This is the penultimate step in the biosynthesis of riboflavin. The polypeptide is 6,7-dimethyl-8-ribityllumazine synthase (Lactiplantibacillus plantarum (strain ATCC BAA-793 / NCIMB 8826 / WCFS1) (Lactobacillus plantarum)).